A 146-amino-acid chain; its full sequence is Angiogenin (146 aa).

A signal peptide spans Met-1–Ala-24. Gln-25 carries the post-translational modification Pyrrolidone carboxylic acid. His-37 (proton acceptor) is an active-site residue. Arg-45 is a tRNA binding site. 3 disulfide bridges follow: Cys-50–Cys-105, Cys-63–Cys-116, and Cys-81–Cys-131. Residues Arg-55–Leu-59 carry the Nucleolar localization signal motif. Residues Cys-105 and Ile-127 each coordinate tRNA. The active-site Proton donor is His-138.

It belongs to the pancreatic ribonuclease family. As to quaternary structure, homodimer. Interacts with RNH1; inhibiting ANG ribonuclease activity. Interacts with PCNA.

It localises to the secreted. Its subcellular location is the nucleus. It is found in the nucleolus. The protein localises to the cytoplasm. The protein resides in the stress granule. Its activity is regulated as follows. Has weak tRNA ribonuclease activity by itself due to partial autoinhibition by its C-terminus, which folds into a short alpha-helix that partially occludes the substrate-binding site. In absence of stress, the ribonuclease activity is inhibited by RNH1 in the cytoplasm. In response to stress, dissociates from RNH1 in the cytoplasm and associates with cytoplasmic ribosomes with vacant A-sites: ribosomes directly activate the tRNA ribonuclease activity of ANG by refolding the C-terminal alpha-helix. In response to stress, the angiogenic activity of ANG is inhibited by RNH1 in the nucleus. Functionally, secreted ribonuclease that can either promote or restrict cell proliferation of target cells, depending on the context. Endocytosed in target cells via its receptor PLXNB2 and translocates to the cytoplasm or nucleus. Under stress conditions, localizes to the cytoplasm and promotes the assembly of stress granules (SGs): specifically cleaves a subset of tRNAs within anticodon loops to produce tRNA-derived stress-induced fragments (tiRNAs), resulting in translation repression and inhibition of cell proliferation. tiRNas also prevent formation of apoptosome, thereby promoting cell survival. Preferentially cleaves RNAs between a pyrimidine and an adenosine residue, suggesting that it cleaves the anticodon loop of tRNA(Ala) (32-UUAGCAU-38) after positions 33 and 36. Cleaves a subset of tRNAs, including tRNA(Ala), tRNA(Glu), tRNA(Gly), tRNA(Lys), tRNA(Val), tRNA(His), tRNA(Asp) and tRNA(Sec). Under growth conditions and in differentiated cells, translocates to the nucleus and stimulates ribosomal RNA (rRNA) transcription, including that containing the initiation site sequences of 45S rRNA, thereby promoting cell growth and proliferation. Angiogenin induces vascularization of normal and malignant tissues via its ability to promote rRNA transcription. Involved in hematopoietic stem and progenitor cell (HSPC) growth and survival by promoting rRNA transcription in growth conditions and inhibiting translation in response to stress, respectively. Mediates the crosstalk between myeloid and intestinal epithelial cells to protect the intestinal epithelial barrier integrity: secreted by myeloid cells and promotes intestinal epithelial cells proliferation and survival. Also mediates osteoclast-endothelial cell crosstalk in growing bone: produced by osteoclasts and protects the neighboring vascular cells against senescence by promoting rRNA transcription. The chain is Angiogenin (ANG) from Papio hamadryas (Hamadryas baboon).